The chain runs to 76 residues: UPF0291 protein BCE_1981 (76 aa).

Belongs to the UPF0291 family.

Its subcellular location is the cytoplasm. This chain is UPF0291 protein BCE_1981, found in Bacillus cereus (strain ATCC 10987 / NRS 248).